Here is a 134-residue protein sequence, read N- to C-terminus: Small ribosomal subunit protein uS11 (134 aa).

A disordered region spans residues 1-24; the sequence is MATKMAGVKRAGRKRKERKNIERG.

The protein belongs to the universal ribosomal protein uS11 family. Part of the 30S ribosomal subunit. Interacts with proteins S7 and S18. Binds to IF-3.

Its function is as follows. Located on the platform of the 30S subunit, it bridges several disparate RNA helices of the 16S rRNA. Forms part of the Shine-Dalgarno cleft in the 70S ribosome. This chain is Small ribosomal subunit protein uS11, found in Acetivibrio thermocellus (strain ATCC 27405 / DSM 1237 / JCM 9322 / NBRC 103400 / NCIMB 10682 / NRRL B-4536 / VPI 7372) (Clostridium thermocellum).